The following is a 905-amino-acid chain: DNA gyrase subunit A (905 aa).

Positions 35-524 constitute a Topo IIA-type catalytic domain; the sequence is IPDVRDGLKP…GEFDQDIEDL (490 aa). Tyrosine 123 functions as the O-(5'-phospho-DNA)-tyrosine intermediate in the catalytic mechanism. Positions 551 to 557 match the GyrA-box motif; sequence QKRGGKG. A disordered region spans residues 885–905; it reads TAESEEDSELEEEGLEQSEEV. Residues 886–905 are compositionally biased toward acidic residues; that stretch reads AESEEDSELEEEGLEQSEEV.

The protein belongs to the type II topoisomerase GyrA/ParC subunit family. In terms of assembly, heterotetramer, composed of two GyrA and two GyrB chains. In the heterotetramer, GyrA contains the active site tyrosine that forms a transient covalent intermediate with DNA, while GyrB binds cofactors and catalyzes ATP hydrolysis.

It is found in the cytoplasm. It catalyses the reaction ATP-dependent breakage, passage and rejoining of double-stranded DNA.. A type II topoisomerase that negatively supercoils closed circular double-stranded (ds) DNA in an ATP-dependent manner to modulate DNA topology and maintain chromosomes in an underwound state. Negative supercoiling favors strand separation, and DNA replication, transcription, recombination and repair, all of which involve strand separation. Also able to catalyze the interconversion of other topological isomers of dsDNA rings, including catenanes and knotted rings. Type II topoisomerases break and join 2 DNA strands simultaneously in an ATP-dependent manner. The protein is DNA gyrase subunit A of Rickettsia conorii (strain ATCC VR-613 / Malish 7).